Reading from the N-terminus, the 2542-residue chain is Highly reducing polyketide synthase (2542 aa).

The region spanning 7–435 (PEPIAIVGMA…GANAHAILDA (429 aa)) is the Ketosynthase family 3 (KS3) domain. Active-site for beta-ketoacyl synthase activity residues include cysteine 182, histidine 317, and histidine 357. One can recognise a Malonyl-CoA:ACP transacylase (MAT) domain in the interval 545–872 (FVFTGQGAQW…NLVGSLFLSG (328 aa)). Residues 927–1062 (HDLLGSRIPG…TTNETLRINS (136 aa)) form an N-terminal hotdog fold region. The region spanning 927-1224 (HDLLGSRIPG…FLSLETATKE (298 aa)) is the PKS/mFAS DH domain. Residue histidine 959 is the Proton acceptor; for dehydratase activity of the active site. Residues 1072–1224 (NKDSYVRRWY…FLSLETATKE (153 aa)) form a C-terminal hotdog fold region. Aspartate 1137 serves as the catalytic Proton donor; for dehydratase activity. The segment at 1275 to 1574 (LTQLAIRSVV…AGADIMLDDY (300 aa)) is methyltransferase (CMet) domain. The tract at residues 1606–1634 (VNGTNGINSTNSVNVTNDTSGINDTNRMN) is disordered. In terms of domain architecture, Enoyl reductase (ER) spans 1866–2186 (GKANSFYFES…QGDSVGSVVL (321 aa)). The Ketoreductase (KR) domain occupies 2209–2389 (ASYLLVGCLG…QAMSMALGMI (181 aa)).

It depends on pantetheine 4'-phosphate as a cofactor.

The protein operates within antifungal biosynthesis. Its function is as follows. Highly reducing polyketide synthase; part of the gene cluster that mediates the biosynthesis of the tetrahydropyranyl antifungal agent lanomycin that acts as an inhibitor of CYP51 and blocks the ergosterol biosynthesis. The biosynthesis probably begins with the formation of an hexaketide, followed by methionine mediated alkylation of C-2 and C-6, and methylation of the reduced C-3 oxygen, pyran forming reductive ring closure, oxygenation of C-4, beta-keto reduction, enoyl reduction and dehydration of the remaining oxygens, and finally, acylation with glycine to complete the biosynthesis. The sequence is that of Highly reducing polyketide synthase from Pyrenophora dematioidea (Helminthosporium dematioideum).